Consider the following 378-residue polypeptide: Alanine racemase (378 aa).

Catalysis depends on K35, which acts as the Proton acceptor; specific for D-alanine. N6-(pyridoxal phosphate)lysine is present on K35. A substrate-binding site is contributed by R133. Y266 acts as the Proton acceptor; specific for L-alanine in catalysis. M314 contacts substrate.

The protein belongs to the alanine racemase family. The cofactor is pyridoxal 5'-phosphate.

It catalyses the reaction L-alanine = D-alanine. It functions in the pathway amino-acid biosynthesis; D-alanine biosynthesis; D-alanine from L-alanine: step 1/1. Its function is as follows. Catalyzes the interconversion of L-alanine and D-alanine. May also act on other amino acids. The polypeptide is Alanine racemase (alr) (Beutenbergia cavernae (strain ATCC BAA-8 / DSM 12333 / CCUG 43141 / JCM 11478 / NBRC 16432 / NCIMB 13614 / HKI 0122)).